The primary structure comprises 352 residues: Ion-translocating oxidoreductase complex subunit D (352 aa).

4 consecutive transmembrane segments (helical) span residues 20-40, 42-62, 89-109, and 123-143; these read IMLLVLLAAVPGIAAQLWFFG, GTLVQILLASVSALLAEALVL, IPPLAPWWMVVLGTVFAVIIA, and PAMIGYVVLLISFPVQMTSWL. Threonine 187 carries the post-translational modification FMN phosphoryl threonine. The next 5 membrane-spanning stretches (helical) occupy residues 214 to 234, 242 to 262, 267 to 287, 301 to 321, and 322 to 342; these read ILAGAGWQWVNLAWLAGGVWL, WHIPLSFLVTLALCATLGWLF, LAAPQIHLLSGATMLGAFFIL, LIFGALAGLLVWLIRSFGGYP, and DGVAFAVLLANITVPLIDYYT.

It belongs to the NqrB/RnfD family. As to quaternary structure, the complex is composed of six subunits: RsxA, RsxB, RsxC, RsxD, RsxE and RsxG. Requires FMN as cofactor.

It is found in the cell inner membrane. Functionally, part of a membrane-bound complex that couples electron transfer with translocation of ions across the membrane. Required to maintain the reduced state of SoxR. This is Ion-translocating oxidoreductase complex subunit D from Escherichia coli O127:H6 (strain E2348/69 / EPEC).